A 237-amino-acid polypeptide reads, in one-letter code: Orotidine 5'-phosphate decarboxylase (237 aa).

Substrate is bound by residues D17, K39, 66-75, T121, R182, Q191, G211, and R212; that span reads DLKLHDIGNT. Residue K68 is the Proton donor of the active site.

This sequence belongs to the OMP decarboxylase family. Type 1 subfamily. As to quaternary structure, homodimer.

The enzyme catalyses orotidine 5'-phosphate + H(+) = UMP + CO2. It participates in pyrimidine metabolism; UMP biosynthesis via de novo pathway; UMP from orotate: step 2/2. In terms of biological role, catalyzes the decarboxylation of orotidine 5'-monophosphate (OMP) to uridine 5'-monophosphate (UMP). In Rhodopseudomonas palustris (strain ATCC BAA-98 / CGA009), this protein is Orotidine 5'-phosphate decarboxylase.